The following is a 339-amino-acid chain: DNA-directed RNA polymerase subunit alpha (339 aa).

The segment at 1-233 (MVREEVAGST…DLFLPFLHAE (233 aa)) is alpha N-terminal domain (alpha-NTD). Positions 264–339 (KKGIPLNCIF…IDLLKNKLSF (76 aa)) are alpha C-terminal domain (alpha-CTD).

This sequence belongs to the RNA polymerase alpha chain family. In plastids the minimal PEP RNA polymerase catalytic core is composed of four subunits: alpha, beta, beta', and beta''. When a (nuclear-encoded) sigma factor is associated with the core the holoenzyme is formed, which can initiate transcription.

The protein resides in the plastid. It localises to the chloroplast. It catalyses the reaction RNA(n) + a ribonucleoside 5'-triphosphate = RNA(n+1) + diphosphate. DNA-dependent RNA polymerase catalyzes the transcription of DNA into RNA using the four ribonucleoside triphosphates as substrates. This is DNA-directed RNA polymerase subunit alpha from Festucopsis serpentini.